A 504-amino-acid polypeptide reads, in one-letter code: MDKFQGYLEFDGARQQSFLYPLFFREYIYVLAYDHGLNRLNRNRYIFLENADYDKKYSSLITKRLILRMYEQNRLIIPTKDVNQNSFLGHTSLFYYQMISVLFAVIVEIPFSLRLGSSFQGKQLKKSYNLQSIHSIFPFLEDKLGHFNYVLDVLIPYPIHLEILVQTLRYRVKDASSLHFFRFCLYEYCNWKNFYIKKKSILNPRFFLFLYNSHVCEYESIFFFLRKRSSHLRSTSYEVLFERIVFYGKIHHFFKVFVNNFPAILGLLKDPFIHYVRYHGRCILATKDTPLLMNKWKYYFVNLWQCYFSVWFQSQKVNINQLSKDNLEFLGYLSSLRLNPLVVRSQMLENSFLIDNVRIKLDSKIPISSIIGSLAKDKFCNVLGHPISKATWTDSSDSDILNRFVRICRNISHYYSGSSKKKNLYRIKYILRLCCVKTLARKHKSTVRTFLKRLGSGLLEEFLTGEDQVLSLIFPRSYYASKRLYRVRIWYLDILYLNDLVNHE.

This sequence belongs to the intron maturase 2 family. MatK subfamily.

The protein localises to the plastid. It is found in the chloroplast. Usually encoded in the trnK tRNA gene intron. Probably assists in splicing its own and other chloroplast group II introns. The polypeptide is Maturase K (Arabidopsis thaliana (Mouse-ear cress)).